Reading from the N-terminus, the 226-residue chain is 2-C-methyl-D-erythritol 4-phosphate cytidylyltransferase (226 aa).

The protein belongs to the IspD/TarI cytidylyltransferase family. IspD subfamily.

The enzyme catalyses 2-C-methyl-D-erythritol 4-phosphate + CTP + H(+) = 4-CDP-2-C-methyl-D-erythritol + diphosphate. The protein operates within isoprenoid biosynthesis; isopentenyl diphosphate biosynthesis via DXP pathway; isopentenyl diphosphate from 1-deoxy-D-xylulose 5-phosphate: step 2/6. Its function is as follows. Catalyzes the formation of 4-diphosphocytidyl-2-C-methyl-D-erythritol from CTP and 2-C-methyl-D-erythritol 4-phosphate (MEP). The sequence is that of 2-C-methyl-D-erythritol 4-phosphate cytidylyltransferase from Bacillus thuringiensis (strain Al Hakam).